Reading from the N-terminus, the 330-residue chain is Global transcription regulator sge1 (330 aa).

2 disordered regions span residues 93-123 (PPGE…RNSV) and 239-306 (QYAP…HQPQ). Positions 105–114 (GKSTTQSGGI) are enriched in polar residues. Positions 250–306 (QQPALQQQPQQQPQPQHQPQLQYQPQPHQHQPQLQYQPQQQHQPQQQYRPQPQHQPQ) are enriched in low complexity.

The protein belongs to the MIT1/WOR1 family.

It is found in the nucleus. In terms of biological role, global transcriptional regulator of pathogenicity. Acts as an activator of parasitic growth. Not essential for colonization or penetration of the root surface, but required for expression of genes encoding effectors that are secreted during infection. Involved in conidiogenesis, but is not required for conidial fitness, overall (colony) morphology, vegetative growth or carbon source utilization. In Fusarium oxysporum f. sp. lycopersici (strain 4287 / CBS 123668 / FGSC 9935 / NRRL 34936) (Fusarium vascular wilt of tomato), this protein is Global transcription regulator sge1.